We begin with the raw amino-acid sequence, 192 residues long: Signal peptidase complex subunit 2 (192 aa).

Residues 1–46 (MEEKKTESTNKNVKKANLLDHHSIKHILDESVSDIVTSRGYKEDVR) are Cytoplasmic-facing. Residues 47–69 (LSNLKLILGTIIIVVALVAQFYN) form a helical membrane-spanning segment. At 70 to 78 (KKFPENRDF) the chain is on the lumenal side. The helical transmembrane segment at 79–98 (LIGCIALYVVLNAVLQLILY) threads the bilayer. The Cytoplasmic portion of the chain corresponds to 99-192 (TKEKNAILFT…YAEEEPKKKK (94 aa)).

It belongs to the SPCS2 family. As to quaternary structure, component of the signal peptidase complex (SPC) composed of a catalytic subunit SEC11 and three accessory subunits SPCS1, SPCS2 and SPCS3. The complex induces a local thinning of the ER membrane which is used to measure the length of the signal peptide (SP) h-region of protein substrates. This ensures the selectivity of the complex towards h-regions shorter than 18-20 amino acids.

Its subcellular location is the endoplasmic reticulum membrane. Its function is as follows. Component of the signal peptidase complex (SPC) which catalyzes the cleavage of N-terminal signal sequences from nascent proteins as they are translocated into the lumen of the endoplasmic reticulum. Enhances the enzymatic activity of SPC and facilitates the interactions between different components of the translocation site. This Arabidopsis thaliana (Mouse-ear cress) protein is Signal peptidase complex subunit 2.